Here is a 309-residue protein sequence, read N- to C-terminus: Isoflavone reductase homolog IRL (309 aa).

Residues 12 to 18 (GGTGYLG), Arg37, and Lys46 each bind NADP(+). The active-site Proton acceptor is the Lys134. Arg138 is an NADP(+) binding site.

It belongs to the NmrA-type oxidoreductase family. Isoflavone reductase subfamily. Monomer.

The protein localises to the cytoplasm. It participates in alkaloid biosynthesis. Functionally, reductase that may be involved in a late step of alkaloid biosynthesis. The polypeptide is Isoflavone reductase homolog IRL (Zea mays (Maize)).